The primary structure comprises 311 residues: MEKYEKLEKVGEGTYGKVYKAMEKTTGKLVALKKTRLEMDEEGIPPTALREISLLQMLSQSIYIVRLLCVEHVIQSKDSTVSHSPKSNLYLVFEYLDTDLKKFIDSHRKGSNPRPLEASLVQRFMFQLFKGVAHCHSHGVLHRDLKPQNLLLDKDKGILKIADLGLSRAFTVPLKAYTHEIVTLWYRAPEVLLGSTHYSTAVDIWSVGCIFAEMIRRQALFPGDSEFQQLLHIFRLLGTPTEQQWPGVMALRDWHVYPKWEPQDLSRAVPSLSPEGIDLLTQMLKYNPAERISAKAALDHPYFDSLDKSQF.

The region spanning 4–303 is the Protein kinase domain; it reads YEKLEKVGEG…AKAALDHPYF (300 aa). Residues 10–18 and lysine 33 contribute to the ATP site; that span reads VGEGTYGKV. Tyrosine 15 is modified (phosphotyrosine). Residue aspartate 144 is the Proton acceptor of the active site. Residue threonine 178 is modified to Phosphothreonine.

The protein belongs to the protein kinase superfamily. CMGC Ser/Thr protein kinase family. CDC2/CDKX subfamily. As to quaternary structure, interacts with CKS1. As to expression, expressed in flowers.

It catalyses the reaction L-seryl-[protein] + ATP = O-phospho-L-seryl-[protein] + ADP + H(+). The enzyme catalyses L-threonyl-[protein] + ATP = O-phospho-L-threonyl-[protein] + ADP + H(+). The catalysed reaction is [DNA-directed RNA polymerase] + ATP = phospho-[DNA-directed RNA polymerase] + ADP + H(+). Together with CDKB1-1, promotes both the last division in the stomatal cell lineage as well as the number of stomata. In collaboration with MYB124 and MYB88, restrict the G1/S transition and chloroplast and nuclear number during stomatal formation, and normally maintain fate and developmental progression throughout the stomatal cell lineage. The sequence is that of Cyclin-dependent kinase B1-2 (CDKB1-2) from Arabidopsis thaliana (Mouse-ear cress).